A 516-amino-acid polypeptide reads, in one-letter code: uncharacterized protein (516 aa).

Positions 1 to 22 are cleaved as a signal peptide; that stretch reads MLYRFWKTGLAIFMPGCILLSS. Residue cysteine 23 is the site of N-palmitoyl cysteine attachment. Residue cysteine 23 is the site of S-diacylglycerol cysteine attachment.

This sequence belongs to the MG067/MG068/MG395 family.

It is found in the cell membrane. This is an uncharacterized protein from Mycoplasma genitalium (strain ATCC 33530 / DSM 19775 / NCTC 10195 / G37) (Mycoplasmoides genitalium).